The following is a 265-amino-acid chain: MSKITALFKELKASGKKGLIPFITAGDPDPKLTVELMHALVRGGSSVIELGVPFSDPMADGPVIQRSSERALTQGVTLHSCLDMVKEFRKKDATTPVVLMGYANPVEQMGAERFATEAKAAGVDGVLIVDYPPEECVDFAARMRVAGIDPIFLLAPTSSHERIKEAAKIASGYIYYVSMRGVTGASHLNTQDVASIIPKIREETDIPIAVGFGINDAASAKAVSVSADAVVIGSRIIRLLEDAPPGQAVQSLETFIREIRDALDS.

Residues Glu-49 and Asp-60 each act as proton acceptor in the active site.

This sequence belongs to the TrpA family. In terms of assembly, tetramer of two alpha and two beta chains.

It carries out the reaction (1S,2R)-1-C-(indol-3-yl)glycerol 3-phosphate + L-serine = D-glyceraldehyde 3-phosphate + L-tryptophan + H2O. It functions in the pathway amino-acid biosynthesis; L-tryptophan biosynthesis; L-tryptophan from chorismate: step 5/5. In terms of biological role, the alpha subunit is responsible for the aldol cleavage of indoleglycerol phosphate to indole and glyceraldehyde 3-phosphate. The polypeptide is Tryptophan synthase alpha chain (Polynucleobacter asymbioticus (strain DSM 18221 / CIP 109841 / QLW-P1DMWA-1) (Polynucleobacter necessarius subsp. asymbioticus)).